Consider the following 193-residue polypeptide: Orotate phosphoribosyltransferase (193 aa).

Position 114-122 (114-122) interacts with 5-phospho-alpha-D-ribose 1-diphosphate; sequence EDVITTGGS. 2 residues coordinate orotate: Thr-118 and Arg-146.

It belongs to the purine/pyrimidine phosphoribosyltransferase family. PyrE subfamily. As to quaternary structure, homodimer. Mg(2+) serves as cofactor.

The enzyme catalyses orotidine 5'-phosphate + diphosphate = orotate + 5-phospho-alpha-D-ribose 1-diphosphate. It participates in pyrimidine metabolism; UMP biosynthesis via de novo pathway; UMP from orotate: step 1/2. Functionally, catalyzes the transfer of a ribosyl phosphate group from 5-phosphoribose 1-diphosphate to orotate, leading to the formation of orotidine monophosphate (OMP). The polypeptide is Orotate phosphoribosyltransferase (Chlorobaculum parvum (strain DSM 263 / NCIMB 8327) (Chlorobium vibrioforme subsp. thiosulfatophilum)).